Here is a 239-residue protein sequence, read N- to C-terminus: tRNA (guanine-N(7)-)-methyltransferase (239 aa).

S-adenosyl-L-methionine contacts are provided by glutamate 69, glutamate 94, aspartate 121, and aspartate 144. Aspartate 144 is a catalytic residue. Lysine 148 contacts substrate. The interval 150-155 is interaction with RNA; it reads RHNKRR. Residues aspartate 180 and 217 to 220 contribute to the substrate site; that span reads TKFE.

It belongs to the class I-like SAM-binding methyltransferase superfamily. TrmB family. In terms of assembly, monomer.

It carries out the reaction guanosine(46) in tRNA + S-adenosyl-L-methionine = N(7)-methylguanosine(46) in tRNA + S-adenosyl-L-homocysteine. It participates in tRNA modification; N(7)-methylguanine-tRNA biosynthesis. Catalyzes the formation of N(7)-methylguanine at position 46 (m7G46) in tRNA. The chain is tRNA (guanine-N(7)-)-methyltransferase from Yersinia pestis (strain Pestoides F).